Reading from the N-terminus, the 277-residue chain is MRRPAPYHRVAAIMTILSLAGAGHQARLDARGGMLTGPTANLAPGHVQANLAILPQAVAGDFLRFCQRNPKPCPLLAVSEPGDPSLPELGLDIDIRTDVPRYRVWRDGKLVDEPLDVRGLWRDDLVAFLIGCSFSFEEAMLENGLPVRHIEQGCNVPMYRTNIATHPAGPFSGPLVVSMRPLKAADAIRAIQVTSRFPSVHGAPVHLGDPALIGIADLGRPDYGDAVEIRAGEIPVFWACGVTPQSVVAAVRPEFCITHAPGHMLVTDLLNSRLAAF.

It belongs to the D-glutamate cyclase family.

This is Putative hydro-lyase BP1875 from Bordetella pertussis (strain Tohama I / ATCC BAA-589 / NCTC 13251).